A 280-amino-acid polypeptide reads, in one-letter code: Succinate dehydrogenase [ubiquinone] iron-sulfur subunit, mitochondrial (280 aa).

The transit peptide at Met1 to Gly28 directs the protein to the mitochondrion. Residues Lys40–Pro131 form the 2Fe-2S ferredoxin-type domain. N6-acetyllysine is present on residues Lys51 and Lys55. Cys93, Cys98, Cys101, and Cys113 together coordinate [2Fe-2S] cluster. Residues Phe146–Trp218 are interaction with SDHAF1. The 4Fe-4S ferredoxin-type domain occupies Glu176–Tyr206. [4Fe-4S] cluster-binding residues include Cys186, Cys189, and Cys192. Residue Cys196 coordinates [3Fe-4S] cluster. Residue Trp201 participates in a ubiquinone binding. The [3Fe-4S] cluster site is built by Cys243 and Cys249. Residue Cys253 coordinates [4Fe-4S] cluster.

It belongs to the succinate dehydrogenase/fumarate reductase iron-sulfur protein family. Component of complex II composed of four subunits: the flavoprotein (FP) SDHA, iron-sulfur protein (IP) SDHB, and a cytochrome b560 composed of SDHC and SDHD. Interacts with SDHAF1; the interaction is required for iron-sulfur cluster incorporation into SDHB. [2Fe-2S] cluster is required as a cofactor. Requires [3Fe-4S] cluster as cofactor. The cofactor is [4Fe-4S] cluster.

The protein resides in the mitochondrion inner membrane. The catalysed reaction is a quinone + succinate = fumarate + a quinol. It carries out the reaction (R)-malate + a quinone = enol-oxaloacetate + a quinol. The enzyme catalyses (S)-malate + a quinone = enol-oxaloacetate + a quinol. Its pathway is carbohydrate metabolism; tricarboxylic acid cycle; fumarate from succinate (eukaryal route): step 1/1. Enol-oxaloacetate inhibits the succinate dehydrogenase activity. Functionally, iron-sulfur protein (IP) subunit of the succinate dehydrogenase complex (mitochondrial respiratory chain complex II), responsible for transferring electrons from succinate to ubiquinone (coenzyme Q). SDH also oxidizes malate to the non-canonical enol form of oxaloacetate, enol-oxaloacetate. Enol-oxaloacetate, which is a potent inhibitor of the succinate dehydrogenase activity, is further isomerized into keto-oxaloacetate. The sequence is that of Succinate dehydrogenase [ubiquinone] iron-sulfur subunit, mitochondrial (SDHB) from Sus scrofa (Pig).